A 136-amino-acid polypeptide reads, in one-letter code: Large ribosomal subunit protein eL27 (136 aa).

Residues 5–40 enclose the KOW domain; it reads MKPGKVVMVLAGRYAGRKAVIVKNIDDGTADRPYSH.

The protein belongs to the eukaryotic ribosomal protein eL27 family. Component of the large ribosomal subunit.

The protein resides in the cytoplasm. The protein localises to the cytosol. It localises to the rough endoplasmic reticulum. Its function is as follows. Component of the large ribosomal subunit. The protein is Large ribosomal subunit protein eL27 (rpl27) of Danio rerio (Zebrafish).